The following is a 178-amino-acid chain: Cytochrome b6-f complex subunit 4 (178 aa).

3 helical membrane passes run 36-56 (LSYI…GLAV), 95-115 (LLGV…PFLE), and 131-151 (TVSL…ALPI).

Belongs to the cytochrome b family. PetD subfamily. In terms of assembly, the 4 large subunits of the cytochrome b6-f complex are cytochrome b6, subunit IV (17 kDa polypeptide, petD), cytochrome f and the Rieske protein, while the 4 small subunits are petG, petL, petM and petN. The complex functions as a dimer.

The protein resides in the plastid. It localises to the chloroplast thylakoid membrane. Functionally, component of the cytochrome b6-f complex, which mediates electron transfer between photosystem II (PSII) and photosystem I (PSI), cyclic electron flow around PSI, and state transitions. This chain is Cytochrome b6-f complex subunit 4, found in Picea abies (Norway spruce).